The following is a 142-amino-acid chain: Small ribosomal subunit protein uS12 (142 aa).

The protein belongs to the universal ribosomal protein uS12 family. In terms of assembly, part of the 30S ribosomal subunit.

With S4 and S5 plays an important role in translational accuracy. Located at the interface of the 30S and 50S subunits. The sequence is that of Small ribosomal subunit protein uS12 from Methanothrix thermoacetophila (strain DSM 6194 / JCM 14653 / NBRC 101360 / PT) (Methanosaeta thermophila).